The sequence spans 290 residues: ATP synthase gamma chain (290 aa).

Belongs to the ATPase gamma chain family. F-type ATPases have 2 components, CF(1) - the catalytic core - and CF(0) - the membrane proton channel. CF(1) has five subunits: alpha(3), beta(3), gamma(1), delta(1), epsilon(1). CF(0) has three main subunits: a, b and c.

It is found in the cell membrane. Its function is as follows. Produces ATP from ADP in the presence of a proton gradient across the membrane. The gamma chain is believed to be important in regulating ATPase activity and the flow of protons through the CF(0) complex. The sequence is that of ATP synthase gamma chain from Buchnera aphidicola subsp. Schlechtendalia chinensis.